The primary structure comprises 341 residues: MRLPEISIWKVILLLHLFALQEFQLVSAANLPSLSSSTKAADSSSKGSSSAKTTTSLGKSSVTSKDVSSSHNVTSSTKMPKITTSASTSLYTNSSLWSNNSVISTSSITPSSVYIPVTDGNKFLYQAHHPNGTVFIAFAGCLGAILLSLTGAWIALNIKSWRSARKENKLRNLENQYQHDPFYFQTNINDDESETSSHSDDSDISEKVLKNNSSRMSLYTLGSTSVLNLLNNKTDANDNFRSSMFISPTEILQSDANNSNTWSQSNESAIYDSLSSTPREPGATQILGKFTDSTNPFNYTSYNLSPDSEDRSTPKSNVSQGKVKKYRPPSVHLDQLLDGKE.

Low complexity predominate over residues 35 to 70 (SSSTKAADSSSKGSSSAKTTTSLGKSSVTSKDVSSS). Disordered regions lie at residues 35–78 (SSST…SSTK), 272–291 (DSLSSTPREPGATQILGKFT), and 298–341 (NYTS…DGKE).

Functionally, appears to be a structural component of the chitin synthase 3 complex. The protein is Chitin synthase 3 complex protein CSI2 (CSI2) of Saccharomyces cerevisiae (strain ATCC 204508 / S288c) (Baker's yeast).